The sequence spans 227 residues: NAD(P)H-quinone oxidoreductase subunit K, chloroplastic (227 aa).

[4Fe-4S] cluster contacts are provided by cysteine 43, cysteine 44, cysteine 108, and cysteine 139.

This sequence belongs to the complex I 20 kDa subunit family. In terms of assembly, NDH is composed of at least 16 different subunits, 5 of which are encoded in the nucleus. Requires [4Fe-4S] cluster as cofactor.

It is found in the plastid. It localises to the chloroplast thylakoid membrane. The catalysed reaction is a plastoquinone + NADH + (n+1) H(+)(in) = a plastoquinol + NAD(+) + n H(+)(out). The enzyme catalyses a plastoquinone + NADPH + (n+1) H(+)(in) = a plastoquinol + NADP(+) + n H(+)(out). Functionally, NDH shuttles electrons from NAD(P)H:plastoquinone, via FMN and iron-sulfur (Fe-S) centers, to quinones in the photosynthetic chain and possibly in a chloroplast respiratory chain. The immediate electron acceptor for the enzyme in this species is believed to be plastoquinone. Couples the redox reaction to proton translocation, and thus conserves the redox energy in a proton gradient. The chain is NAD(P)H-quinone oxidoreductase subunit K, chloroplastic from Citrus sinensis (Sweet orange).